We begin with the raw amino-acid sequence, 374 residues long: Probable tRNA pseudouridine synthase D (374 aa).

D81 serves as the catalytic Nucleophile. The region spanning 141 to 340 is the TRUD domain; that stretch reads VFPNYFDVQR…RKGFQKMYDL (200 aa).

It belongs to the pseudouridine synthase TruD family.

It catalyses the reaction uridine(13) in tRNA = pseudouridine(13) in tRNA. Functionally, could be responsible for synthesis of pseudouridine from uracil-13 in transfer RNAs. The polypeptide is Probable tRNA pseudouridine synthase D (Nanoarchaeum equitans (strain Kin4-M)).